The primary structure comprises 624 residues: Phosphatidylserine decarboxylase proenzyme 2 (624 aa).

The disordered stretch occupies residues 1–30 (MGHSPSRHNACGGGGGDGESPPSPLPSRFE). In terms of domain architecture, C2 spans 16 to 129 (GDGESPPSPL…KDLDEHSEVL (114 aa)). EF-hand domains are found at residues 156-191 (TEQS…FGNK) and 192-227 (LAVA…QQEK). Asp169, Asn171, Asp173, Glu175, Glu180, Asp205, Asn207, Asp209, and Glu216 together coordinate Ca(2+). Residues Asp425, His481, and Ser569 each act as charge relay system; for autoendoproteolytic cleavage activity in the active site. The active-site Schiff-base intermediate with substrate; via pyruvic acid; for decarboxylase activity is Ser569. A Pyruvic acid (Ser); by autocatalysis modification is found at Ser569.

This sequence belongs to the phosphatidylserine decarboxylase family. PSD-B subfamily. Eukaryotic type II sub-subfamily. Heterodimer of a large membrane-associated beta subunit and a small pyruvoyl-containing alpha subunit. Pyruvate is required as a cofactor. Is synthesized initially as an inactive proenzyme. Formation of the active enzyme involves a self-maturation process in which the active site pyruvoyl group is generated from an internal serine residue via an autocatalytic post-translational modification. Two non-identical subunits are generated from the proenzyme in this reaction, and the pyruvate is formed at the N-terminus of the alpha chain, which is derived from the carboxyl end of the proenzyme. The autoendoproteolytic cleavage occurs by a canonical serine protease mechanism, in which the side chain hydroxyl group of the serine supplies its oxygen atom to form the C-terminus of the beta chain, while the remainder of the serine residue undergoes an oxidative deamination to produce ammonia and the pyruvoyl prosthetic group on the alpha chain. During this reaction, the Ser that is part of the protease active site of the proenzyme becomes the pyruvoyl prosthetic group, which constitutes an essential element of the active site of the mature decarboxylase.

The protein localises to the vacuole membrane. It localises to the endoplasmic reticulum membrane. The catalysed reaction is a 1,2-diacyl-sn-glycero-3-phospho-L-serine + H(+) = a 1,2-diacyl-sn-glycero-3-phosphoethanolamine + CO2. The protein operates within phospholipid metabolism; phosphatidylethanolamine biosynthesis; phosphatidylethanolamine from CDP-diacylglycerol: step 2/2. Its function is as follows. Catalyzes the formation of phosphatidylethanolamine (PtdEtn) from phosphatidylserine (PtdSer). Plays a central role in phospholipid metabolism and in the interorganelle trafficking of phosphatidylserine. The sequence is that of Phosphatidylserine decarboxylase proenzyme 2 from Oryza sativa subsp. japonica (Rice).